Reading from the N-terminus, the 161-residue chain is Large ribosomal subunit protein bL17 (161 aa).

Positions 126-161 (KVAKKATRTRRSKKTTEAAPAAEVPATEEPKAESAE) are disordered. Residues 129 to 138 (KKATRTRRSK) are compositionally biased toward basic residues. The segment covering 142-152 (EAAPAAEVPAT) has biased composition (low complexity).

Belongs to the bacterial ribosomal protein bL17 family. Part of the 50S ribosomal subunit. Contacts protein L32.

This chain is Large ribosomal subunit protein bL17, found in Bacteroides fragilis (strain ATCC 25285 / DSM 2151 / CCUG 4856 / JCM 11019 / LMG 10263 / NCTC 9343 / Onslow / VPI 2553 / EN-2).